A 919-amino-acid chain; its full sequence is Isoleucine--tRNA ligase (919 aa).

The 'HIGH' region motif lies at 57-67 (PYANGHIHIGT). E553 contacts L-isoleucyl-5'-AMP. The short motif at 594–598 (KMSKS) is the 'KMSKS' region element. K597 lines the ATP pocket. Zn(2+) contacts are provided by C887, C890, C907, and C910.

The protein belongs to the class-I aminoacyl-tRNA synthetase family. IleS type 1 subfamily. As to quaternary structure, monomer. Zn(2+) is required as a cofactor.

It localises to the cytoplasm. It catalyses the reaction tRNA(Ile) + L-isoleucine + ATP = L-isoleucyl-tRNA(Ile) + AMP + diphosphate. In terms of biological role, catalyzes the attachment of isoleucine to tRNA(Ile). As IleRS can inadvertently accommodate and process structurally similar amino acids such as valine, to avoid such errors it has two additional distinct tRNA(Ile)-dependent editing activities. One activity is designated as 'pretransfer' editing and involves the hydrolysis of activated Val-AMP. The other activity is designated 'posttransfer' editing and involves deacylation of mischarged Val-tRNA(Ile). This Thermotoga petrophila (strain ATCC BAA-488 / DSM 13995 / JCM 10881 / RKU-1) protein is Isoleucine--tRNA ligase.